A 391-amino-acid chain; its full sequence is MSLNPRDVVIVDFGRTPMGRSKGGMHRNTRAEDMSAHLISKLLERNDKIDPKEVEDVIWGCVNQTMEQGWNIARMASLMTPIPHTSAAQTVSRLCGSSMSALHTAAQAIMTGNGDVFVIGGVEHMGHVSMMHGVDPNPHLSLHAAKASGMMGLTAEMLGKMHGITREQQDLFGVRSHQLAHKATVEGKFKDEIIPMQGYDENGFLKVFDFDETIRPETTLEGLASLKPAFNPKGGTVTAGTSSQITDGASCMIVMSGQRAMDLGIQPLAVIRSMAVAGVDPAIMGYGPVPSTQKALKRAGLTMADIDFIELNEAFAAQALPVLKDLKVLDKMDEKVNLHGGAIALGHPFGCSGARISGTLLNVMKQNGGTLGVATMCVGLGQGITTVFERV.

Catalysis depends on Cys-95, which acts as the Acyl-thioester intermediate. Residues His-347 and Cys-377 each act as proton acceptor in the active site.

It belongs to the thiolase-like superfamily. Thiolase family. As to quaternary structure, heterotetramer of two alpha chains (FadB) and two beta chains (FadA).

The protein localises to the cytoplasm. The enzyme catalyses an acyl-CoA + acetyl-CoA = a 3-oxoacyl-CoA + CoA. It functions in the pathway lipid metabolism; fatty acid beta-oxidation. Its function is as follows. Catalyzes the final step of fatty acid oxidation in which acetyl-CoA is released and the CoA ester of a fatty acid two carbons shorter is formed. The polypeptide is 3-ketoacyl-CoA thiolase (Pseudomonas entomophila (strain L48)).